The primary structure comprises 189 residues: UPF0301 protein Cgl3084/cg3414 (189 aa).

This sequence belongs to the UPF0301 (AlgH) family.

This chain is UPF0301 protein Cgl3084/cg3414, found in Corynebacterium glutamicum (strain ATCC 13032 / DSM 20300 / JCM 1318 / BCRC 11384 / CCUG 27702 / LMG 3730 / NBRC 12168 / NCIMB 10025 / NRRL B-2784 / 534).